Consider the following 350-residue polypeptide: Phenylalanine--tRNA ligase alpha subunit (350 aa).

E257 provides a ligand contact to Mg(2+).

This sequence belongs to the class-II aminoacyl-tRNA synthetase family. Phe-tRNA synthetase alpha subunit type 1 subfamily. As to quaternary structure, tetramer of two alpha and two beta subunits. It depends on Mg(2+) as a cofactor.

The protein resides in the cytoplasm. It carries out the reaction tRNA(Phe) + L-phenylalanine + ATP = L-phenylalanyl-tRNA(Phe) + AMP + diphosphate + H(+). The polypeptide is Phenylalanine--tRNA ligase alpha subunit (Listeria monocytogenes serotype 4a (strain HCC23)).